A 581-amino-acid chain; its full sequence is Cytosolic Fe-S cluster assembly factor nar-1 (581 aa).

Residues C20, C68, C71, C74, C215, C270, C457, and C461 each coordinate [4Fe-4S] cluster.

Belongs to the NARF family.

Functionally, component of the cytosolic Fe/S protein assembly machinery. Required for maturation of extramitochondrial Fe/S proteins. May play a role in the transfer of pre-assembled Fe/S clusters to target apoproteins. The protein is Cytosolic Fe-S cluster assembly factor nar-1 (nar-1) of Neurospora crassa (strain ATCC 24698 / 74-OR23-1A / CBS 708.71 / DSM 1257 / FGSC 987).